The chain runs to 540 residues: Tyrosine-protein kinase transforming protein erbB (540 aa).

A Protein kinase domain is found at 132 to 399; that stretch reads FKKVKVLGFG…KMARDPPRYL (268 aa). ATP is bound by residues 138–146 and lysine 165; that span reads LGFGAFGTV. Aspartate 257 serves as the catalytic Proton acceptor.

This sequence belongs to the protein kinase superfamily. Tyr protein kinase family. EGF receptor subfamily.

It carries out the reaction L-tyrosyl-[protein] + ATP = O-phospho-L-tyrosyl-[protein] + ADP + H(+). The polypeptide is Tyrosine-protein kinase transforming protein erbB (V-ERBB) (Avian erythroblastosis virus (strain ts167)).